We begin with the raw amino-acid sequence, 223 residues long: Serine/threonine/tyrosine-interacting protein (223 aa).

The region spanning E28 to A176 is the Tyrosine-protein phosphatase domain. An Interaction with FBXW7 motif is present at residues F76–Q78. Phosphoserine occurs at positions 184 and 201. A disordered region spans residues T199–G223.

The protein belongs to the protein-tyrosine phosphatase family. Non-receptor class subfamily. In terms of assembly, interacts with MAPK1; independently of MAPK1 phosphorylation status. Interacts with CARHSP1/Crhsp-24. Interacts (via FQQ motif) with FBXW7 (via F-box domain); the interaction is direct and prevents FBXW7 interaction with SKP1, a component of the SCF(FBXW7) complex. As to expression, widely expressed with highest levels in muscle, testis and brain. In testis, expression starts 13-14 days after birth and is limited to the seminiferous tubule and to round and elongating spermatids. Expression is low in condensing spermatids and pachytene spermatocytes, and absent in spermatogonia, spermatozoa and somatic Sertoli cells.

It is found in the nucleus. The protein localises to the cytoplasm. Its subcellular location is the cytosol. In terms of biological role, catalytically inactive phosphatase. Acts as a nuclear anchor for MAPK1/MAPK3 (ERK1/ERK2). Modulates cell-fate decisions and cell migration by spatiotemporal regulation of MAPK1/MAPK3 (ERK1/ERK2). By binding to the F-box of FBXW7, prevents the assembly of FBXW7 into the SCF E3 ubiquitin-protein ligase complex, and thereby inhibits degradation of its substrates. Plays a role in spermatogenesis. This chain is Serine/threonine/tyrosine-interacting protein, found in Mus musculus (Mouse).